The following is a 353-amino-acid chain: UPF0283 membrane protein CKO_01392 (353 aa).

The next 3 helical transmembrane spans lie at M70–T90, W99–V119, and E213–W233.

Belongs to the UPF0283 family.

It is found in the cell inner membrane. The sequence is that of UPF0283 membrane protein CKO_01392 from Citrobacter koseri (strain ATCC BAA-895 / CDC 4225-83 / SGSC4696).